Consider the following 262-residue polypeptide: Putative hydro-lyase Cbei_2760 (262 aa).

Belongs to the D-glutamate cyclase family.

The protein is Putative hydro-lyase Cbei_2760 of Clostridium beijerinckii (strain ATCC 51743 / NCIMB 8052) (Clostridium acetobutylicum).